Here is a 276-residue protein sequence, read N- to C-terminus: Urease accessory protein UreD (276 aa).

Belongs to the UreD family. UreD, UreF and UreG form a complex that acts as a GTP-hydrolysis-dependent molecular chaperone, activating the urease apoprotein by helping to assemble the nickel containing metallocenter of UreC. The UreE protein probably delivers the nickel.

The protein localises to the cytoplasm. Required for maturation of urease via the functional incorporation of the urease nickel metallocenter. The protein is Urease accessory protein UreD of Albidiferax ferrireducens (strain ATCC BAA-621 / DSM 15236 / T118) (Rhodoferax ferrireducens).